The sequence spans 53 residues: UPF0391 membrane protein YPDSF_3201 (53 aa).

The next 2 membrane-spanning stretches (helical) occupy residues 4-24 (WGII…GGLA) and 27-47 (AAWA…ISLF).

Belongs to the UPF0391 family.

It localises to the cell membrane. This chain is UPF0391 membrane protein YPDSF_3201, found in Yersinia pestis (strain Pestoides F).